A 728-amino-acid chain; its full sequence is MAQPPDAAAAAAVPPPVVIDRDVWHACAVPYSGVLPGVGTLVYYIPHGHIEQCAEDPALLLSRLPDPIHPVPCTVADLVLDVDAESGEAYATISLLPGSHDDTTARRQVPAHGEPGFRFFEKQLSPADVTSNALVLPAGAEHVLPPLDIAAYQTARLFDVRDLRGKRFEFVHIWDKKRCRYMLGDLGVNDNDGWRGFVKAKRLATRDTVVFMRRGGGDGDGDGELLVGVRRAPRARGGHHPRPGVEDNKVVSEVWLAMQGVTPFEVTYYPREGTFEFVVSRDEYIGFSFSPFYPFVPGTTVHLRMNPLQIAQSISGTVRTFDHLRPWRMLEVDWDQAASPISYRIHRQVNSWQVLRQPQPAATTSAVRIRDAIVATPQVQIMALPRPPPPTTTTGMVPSDDSYAMISLFPGDCYVTHRPLPAARDPVGGQREFCFFDKKLSPSDAAANGGGSGALFVIPKPSAAEHVLPRIPDLRVTNLQGGRWEFGHTWSDADTDRRSSSHTLAAGWSAFVKAKRLCVGDTVIFMRRRPGGEPLVGVRRKPHGGMPVGIPDKHVADAWLDASSAQPFRVTYCPWQGTAEFVVRREEVEGSPPLAPGTRVRLLMNPDDARRRSQPPVYGTVRDVHCRSEWRMLEVDWDRDSPLAPTMNRRVNSWQVQPVQLALPPQGSDEEAAAATTSTAHAGDATTSAPSLALQLQTMASSSSSSAPIIPSRGSAFRIVNPRDGSQG.

The segment at residues 119-233 (FFEKQLSPAD…ELLVGVRRAP (115 aa)) is a DNA-binding region (TF-B3 1). Low complexity-rich tracts occupy residues 665–689 (PQGSDEEAAAATTSTAHAGDATTSA) and 700–712 (ASSSSSSAPIIPS). Residues 665-728 (PQGSDEEAAA…IVNPRDGSQG (64 aa)) are disordered.

It belongs to the ARF family. Homo and heterodimers.

The protein resides in the nucleus. Auxin response factors (ARFs) are transcriptional factors that bind specifically to the DNA sequence 5'-TGTCTC-3' found in the auxin-responsive promoter elements (AuxREs). The sequence is that of Putative auxin response factor 20 (ARF20) from Oryza sativa subsp. japonica (Rice).